Here is a 448-residue protein sequence, read N- to C-terminus: MLIQRGGLKVVAGLGISGVSAVNFLHEQGYQVAVTDSRPTPPGHDQIPAGVKTSFGQLDQELLLQAEEIILSPGLAPQLPEIQAAIAKGISVVGDIQLLRRATDVPIVAITGSNAKSTVTTLIGLMAKDAGKKVAVGGNLGRPALDLLKDQPELLVLELSSFQLETTSHLNAEVAVVLNMSEDHLDRHGNMLGYHQAKHRIFQGAKKVVFNRDDALSRPLVPDTTPMQSFGLNAPDLNQYGVLRDADGTLWLARGLQRLIKSSDLYIQGMHNVANALACLALGEAIGLPMESMLETLKRFKGLEHRCEYVKTVRDVRYYNDSKGTNVGATLAAIDGLGAAIEVKKGKVALILGGQGKGQDFSPLRSSIEKYAKVVVLIGEDAPVIEQAIQGATKILHAATLKEAVELCQRETQAEDVVLLSPACASFDMFKSYNDRGQQFVACVNSLV.

Residue 112-118 (GSNAKST) coordinates ATP.

The protein belongs to the MurCDEF family.

It is found in the cytoplasm. The enzyme catalyses UDP-N-acetyl-alpha-D-muramoyl-L-alanine + D-glutamate + ATP = UDP-N-acetyl-alpha-D-muramoyl-L-alanyl-D-glutamate + ADP + phosphate + H(+). Its pathway is cell wall biogenesis; peptidoglycan biosynthesis. Its function is as follows. Cell wall formation. Catalyzes the addition of glutamate to the nucleotide precursor UDP-N-acetylmuramoyl-L-alanine (UMA). This Acinetobacter baumannii (strain ACICU) protein is UDP-N-acetylmuramoylalanine--D-glutamate ligase.